A 200-amino-acid polypeptide reads, in one-letter code: Holliday junction resolvase RecU (200 aa).

A disordered region spans residues 1–25; it reads MTIRYPNGKRYNQASQPHKTPIKKH. Mg(2+)-binding residues include T85, D87, E100, and Q119.

Belongs to the RecU family. It depends on Mg(2+) as a cofactor.

Its subcellular location is the cytoplasm. It carries out the reaction Endonucleolytic cleavage at a junction such as a reciprocal single-stranded crossover between two homologous DNA duplexes (Holliday junction).. Functionally, endonuclease that resolves Holliday junction intermediates in genetic recombination. Cleaves mobile four-strand junctions by introducing symmetrical nicks in paired strands. Promotes annealing of linear ssDNA with homologous dsDNA. Required for DNA repair, homologous recombination and chromosome segregation. In Bacillus thuringiensis (strain Al Hakam), this protein is Holliday junction resolvase RecU.